The following is a 764-amino-acid chain: Subtilisin-like protease SBT3.1 (764 aa).

A signal peptide spans 1 to 32 (MIQTLKTDSSFRLCFAAIAFGFVFIMNGKLSS). A propeptide spans 33–120 (GTTPHEFPVY…LLENRKLGLQ (88 aa)) (activation peptide). The 76-residue stretch at 41-116 (VYIFYLGERK…EVIILLENRK (76 aa)) folds into the Inhibitor I9 domain. Residue asparagine 76 is glycosylated (N-linked (GlcNAc...) asparagine). Positions 124–610 (TWDYLGQFST…GGLVNLEKAT (487 aa)) constitute a Peptidase S8 domain. The Charge relay system role is filled by aspartate 156. Asparagine 216 is a glycosylation site (N-linked (GlcNAc...) asparagine). The Charge relay system role is filled by histidine 230. Asparagine 245 and asparagine 374 each carry an N-linked (GlcNAc...) asparagine glycan. Serine 541 serves as the catalytic Charge relay system. Asparagine 674, asparagine 711, and asparagine 747 each carry an N-linked (GlcNAc...) asparagine glycan.

Belongs to the peptidase S8 family.

It is found in the secreted. In Arabidopsis thaliana (Mouse-ear cress), this protein is Subtilisin-like protease SBT3.1.